The primary structure comprises 704 residues: MARTTPIARYRNIGISAHIDAGKTTTTERILFYTGVNHKIGEVHDGAATMDWMEQEQERGITITSAATTAFWSGMAKQYEPHRINIIDTPGHVDFTIEVERSMRVLDGAVMVYCAVGGVQPQSETVWRQANKYKVPRIAFVNKMDRVGANFLKVVNQIKTRLGANPVPLQLAIGAEEHFTGVVDLVKMKAINWNDADQGVTFEYEDIPADMVELANEWHQNLIESAAEASEELMEKYLGGEELTEAEIKGALRQRVLNNEIILVTCGSAFKNKGVQAMLDAVIDYLPSPVDVPAINGILDDGKDTPAERHASDDEPFSALAFKIATDPFVGNLTFFRVYSGVVNSGDTVLNSVKAARERFGRIVQMHANKREEIKEVRAGDIAAAIGLKDVTTGDTLCDPDAPIILERMEFPEPVISIAVEPKTKADQEKMGLALGRLAKEDPSFRVWTDEESNQTIIAGMGELHLDIIVDRMKREFNVEANVGKPQVAYRETIRQKVTDVEGKHAKQSGGRGQYGHVVIDMYPLEPGSNPKGYEFINDIKGGVIPGEYIPAVDKGIQEQLKAGPLAGYPVVDMGIRLHFGSYHDVDSSELAFKLAASIAFKEGFKKAKPVLLEPIMKVEVETPEENTGDVIGDLSRRRGMLKGQESEVTGVKIHAEVPLSEMFGYATQLRSLTKGRASYTMEFLKYDEAPSNVAQAVIEARGK.

A tr-type G domain is found at 8-290 (ARYRNIGISA…AVIDYLPSPV (283 aa)). GTP is bound by residues 17–24 (AHIDAGKT), 88–92 (DTPGH), and 142–145 (NKMD). N6-acetyllysine occurs at positions 504 and 643.

The protein belongs to the TRAFAC class translation factor GTPase superfamily. Classic translation factor GTPase family. EF-G/EF-2 subfamily.

The protein resides in the cytoplasm. Functionally, catalyzes the GTP-dependent ribosomal translocation step during translation elongation. During this step, the ribosome changes from the pre-translocational (PRE) to the post-translocational (POST) state as the newly formed A-site-bound peptidyl-tRNA and P-site-bound deacylated tRNA move to the P and E sites, respectively. Catalyzes the coordinated movement of the two tRNA molecules, the mRNA and conformational changes in the ribosome. This is Elongation factor G from Shigella flexneri.